Consider the following 331-residue polypeptide: Leucine-rich repeat-containing protein 26 (331 aa).

Residues Met1 to Thr26 form the signal peptide. Residues Gln27–Asp261 are Extracellular-facing. The region spanning Pro34–Trp71 is the LRRNT domain. Cystine bridges form between Cys43–Cys49 and Cys47–Cys57. 5 LRR repeats span residues Gln72–Asn93, Ala96–Gly117, Val120–Pro141, Ala144–Pro165, and Leu168–Pro191. One can recognise an LRRCT domain in the interval Asn201 to Gln255. 2 disulfides stabilise this stretch: Cys205/Cys231 and Cys207/Cys253. Residues Leu262–Ala282 form a helical membrane-spanning segment. Residues Leu283–Ala331 lie on the Cytoplasmic side of the membrane. The disordered stretch occupies residues Leu310–Ala331.

As to quaternary structure, interacts with KCNMA1.

It localises to the cell membrane. Its subcellular location is the cytoplasm. The protein resides in the cytoskeleton. Functionally, auxiliary protein of the large-conductance, voltage and calcium-activated potassium channel (BK alpha). Required for the conversion of BK alpha channels from a high-voltage to a low-voltage activated channel type in non-excitable cells. These are characterized by negative membrane voltages and constant low levels of calcium. The protein is Leucine-rich repeat-containing protein 26 (Lrrc26) of Mus musculus (Mouse).